Reading from the N-terminus, the 836-residue chain is Conserved oligomeric Golgi complex subunit 7 (836 aa).

Coiled-coil stretches lie at residues 29–49 and 107–127; these read QDSLEKHLVDLEMKLQIASEE and LARVDNVKQRMEAAYKTLQDA. The disordered stretch occupies residues 246–265; it reads KLANERSESQRLSSGDEFQS.

This sequence belongs to the COG7 family. Component of the conserved oligomeric Golgi complex which is composed of eight different subunits and is required for normal Golgi morphology and localization. Interacts with COG5 and COG6.

Its subcellular location is the golgi apparatus membrane. Functionally, required for normal Golgi function. Necessary for embryo development and pigmentation, especially for the expansion of cells and organs, and for the formation of the organized shoot apical meristem (SAM). Probably involved in the generation of the extra-cellular matrix. In Arabidopsis thaliana (Mouse-ear cress), this protein is Conserved oligomeric Golgi complex subunit 7.